Reading from the N-terminus, the 38-residue chain is uncharacterized protein (38 aa).

The protein belongs to the asfivirus C84L family.

This is an uncharacterized protein from Ornithodoros (relapsing fever ticks).